Consider the following 257-residue polypeptide: GTP cyclohydrolase FolE2 (257 aa).

This sequence belongs to the GTP cyclohydrolase IV family.

It carries out the reaction GTP + H2O = 7,8-dihydroneopterin 3'-triphosphate + formate + H(+). The protein operates within cofactor biosynthesis; 7,8-dihydroneopterin triphosphate biosynthesis; 7,8-dihydroneopterin triphosphate from GTP: step 1/1. Its function is as follows. Converts GTP to 7,8-dihydroneopterin triphosphate. This chain is GTP cyclohydrolase FolE2, found in Syntrophobacter fumaroxidans (strain DSM 10017 / MPOB).